Reading from the N-terminus, the 274-residue chain is Ribosomal RNA small subunit methyltransferase A (274 aa).

S-adenosyl-L-methionine-binding residues include histidine 15, leucine 17, glycine 42, glutamate 64, aspartate 89, and asparagine 108.

Belongs to the class I-like SAM-binding methyltransferase superfamily. rRNA adenine N(6)-methyltransferase family. RsmA subfamily.

The protein localises to the cytoplasm. The catalysed reaction is adenosine(1518)/adenosine(1519) in 16S rRNA + 4 S-adenosyl-L-methionine = N(6)-dimethyladenosine(1518)/N(6)-dimethyladenosine(1519) in 16S rRNA + 4 S-adenosyl-L-homocysteine + 4 H(+). Specifically dimethylates two adjacent adenosines (A1518 and A1519) in the loop of a conserved hairpin near the 3'-end of 16S rRNA in the 30S particle. May play a critical role in biogenesis of 30S subunits. The sequence is that of Ribosomal RNA small subunit methyltransferase A from Prochlorococcus marinus (strain MIT 9215).